A 60-amino-acid chain; its full sequence is Large ribosomal subunit protein uL30 (60 aa).

Belongs to the universal ribosomal protein uL30 family. As to quaternary structure, part of the 50S ribosomal subunit.

This is Large ribosomal subunit protein uL30 from Acidovorax ebreus (strain TPSY) (Diaphorobacter sp. (strain TPSY)).